A 336-amino-acid chain; its full sequence is Formimidoylglutamase (336 aa).

6 residues coordinate Mn(2+): His-129, Asp-160, His-162, Asp-164, Asp-257, and Asp-259.

Belongs to the arginase family. Mn(2+) is required as a cofactor.

The enzyme catalyses N-formimidoyl-L-glutamate + H2O = formamide + L-glutamate. Its pathway is amino-acid degradation; L-histidine degradation into L-glutamate; L-glutamate from N-formimidoyl-L-glutamate (hydrolase route): step 1/1. Its function is as follows. Catalyzes the conversion of N-formimidoyl-L-glutamate to L-glutamate and formamide. This Vibrio vulnificus (strain CMCP6) protein is Formimidoylglutamase.